The following is a 633-amino-acid chain: ATP-dependent clpX-like chaperone, mitochondrial (633 aa).

Residues 1 to 56 (MPSCGACTCGAAAVRLITSSLASAQRGISGGRIHMSVLGRLGTFETQILQRAPLRS) constitute a mitochondrion transit peptide. Positions 68-100 (DGISKDGSGDGNKKSASEGSSKKSGSGNSGKGG) are disordered. The segment covering 69-83 (GISKDGSGDGNKKSA) has biased composition (basic and acidic residues). Residues 84–93 (SEGSSKKSGS) are compositionally biased toward low complexity. One can recognise a ClpX-type ZB domain in the interval 93 to 146 (SGNSGKGGNQLRCPKCGDLCTHVETFVSSTRFVKCEKCHHFFVVLSEADSKKSI). Residues Cys105, Cys108, Cys127, and Cys130 each coordinate Zn(2+). Residue 294 to 301 (PTGSGKTL) participates in ATP binding. N6-acetyllysine is present on Lys437. Residues 598–610 (KEPGYIRAPTKES) are compositionally biased toward basic and acidic residues. Residues 598-633 (KEPGYIRAPTKESSEEEYDSGVEEEGWPRQADAANS) form a disordered region. Positions 611 to 622 (SEEEYDSGVEEE) are enriched in acidic residues. At Ser617 the chain carries Phosphoserine.

This sequence belongs to the ClpX chaperone family. In terms of assembly, homohexamer that forms a ring structure; this hexamerization requires ATP binding. Component of the ClpXP complex formed by the assembly of two CLPP heptameric rings with two CLPX hexameric rings, giving rise to a symmetrical structure with two central CLPP rings flanked by a CLPX ring at either end of the complex. Interacts with TFAM. In terms of tissue distribution, higher expression in skeletal muscle and heart and to a lesser extent in liver, brain, placenta, lung, kidney and pancreas.

The protein localises to the mitochondrion. It localises to the mitochondrion matrix. Its subcellular location is the mitochondrion nucleoid. It catalyses the reaction ATP + H2O = ADP + phosphate + H(+). Its function is as follows. ATP-dependent chaperone that functions as an unfoldase. As part of the ClpXP protease complex, it recognizes specific protein substrates, unfolds them using energy derived from ATP hydrolysis, and then translocates them to the proteolytic subunit (CLPP) of the ClpXP complex for degradation. Thanks to its chaperone activity, it also functions in the incorporation of the pyridoxal phosphate cofactor into 5-aminolevulinate synthase, thereby activating 5-aminolevulinate (ALA) synthesis, the first step in heme biosynthesis. This chaperone is also involved in the control of mtDNA nucleoid distribution, by regulating mitochondrial transcription factor A (TFAM) activity. The protein is ATP-dependent clpX-like chaperone, mitochondrial of Homo sapiens (Human).